Reading from the N-terminus, the 645-residue chain is Nucleolar GTP-binding protein 1 (645 aa).

Residues 168-340 enclose the OBG-type G domain; sequence RTLLICGYPN…VRNKACEKLL (173 aa). Residues 174–181, 220–224, and 288–291 each bind GTP; these read GYPNVGKS, DTPGI, and NKTD. The disordered stretch occupies residues 567-645; that stretch reads GQNDSMASGS…KRGIGKSDFR (79 aa). A compositionally biased stretch (basic and acidic residues) spans 612 to 624; sequence NRDARQGEADRHA.

It belongs to the TRAFAC class OBG-HflX-like GTPase superfamily. OBG GTPase family. NOG subfamily.

It is found in the nucleus. The protein resides in the nucleolus. In terms of biological role, involved in the biogenesis of the 60S ribosomal subunit. The chain is Nucleolar GTP-binding protein 1 (NOG1) from Candida glabrata (strain ATCC 2001 / BCRC 20586 / JCM 3761 / NBRC 0622 / NRRL Y-65 / CBS 138) (Yeast).